The sequence spans 413 residues: uncharacterized protein (413 aa).

Positions 1-20 (MRVIIVIMMVVFVVVGTSSG) are cleaved as a signal peptide.

This is an uncharacterized protein from Archaeoglobus fulgidus (strain ATCC 49558 / DSM 4304 / JCM 9628 / NBRC 100126 / VC-16).